The primary structure comprises 339 residues: Glutamyl-tRNA reductase (339 aa).

Residues 50–53 (TCHR), S102, 107–109 (ETE), and Q113 each bind substrate. The active-site Nucleophile is the C51. 181–186 (GYSDIN) is an NADP(+) binding site.

It belongs to the glutamyl-tRNA reductase family. Homodimer.

The catalysed reaction is (S)-4-amino-5-oxopentanoate + tRNA(Glu) + NADP(+) = L-glutamyl-tRNA(Glu) + NADPH + H(+). It participates in porphyrin-containing compound metabolism; protoporphyrin-IX biosynthesis; 5-aminolevulinate from L-glutamyl-tRNA(Glu): step 1/2. Functionally, catalyzes the NADPH-dependent reduction of glutamyl-tRNA(Glu) to glutamate 1-semialdehyde (GSA). This is Glutamyl-tRNA reductase from Chlamydia pneumoniae (Chlamydophila pneumoniae).